We begin with the raw amino-acid sequence, 352 residues long: C-glycoside deglycosidase alpha subunit (352 aa).

Residue E147 coordinates Mn(2+). H149 (proton acceptor) is an active-site residue. 3 residues coordinate Mn(2+): D179, H269, and E305.

This sequence belongs to the C-glycoside deglycosidase alpha subunit family. Heterodimer composed of an alpha subunit (CarB2) and a beta subunit (CarC2). It depends on a divalent metal cation as a cofactor.

The enzyme catalyses 3''-dehydroorientin = 1,5-anhydro-D-erythro-hex-1-en-3-ulose + luteolin. Activity is strongly reduced in the presence of chelating agents. Carbon-carbon bond-cleaving enzyme which participates in the metabolism of C-glycosides. Acts on the C8-glycosylated compound 3''-dehydroorientin (3''-oxo-orientin). In Arthrobacter globiformis (strain ATCC 8010 / DSM 20124 / JCM 1332 / NBRC 12137 / NCIMB 8907 / NRRL B-2979 / 168), this protein is C-glycoside deglycosidase alpha subunit.